The primary structure comprises 462 residues: L-seryl-tRNA(Sec) selenium transferase (462 aa).

Lys-292 is modified (N6-(pyridoxal phosphate)lysine).

Belongs to the SelA family. It depends on pyridoxal 5'-phosphate as a cofactor.

Its subcellular location is the cytoplasm. It carries out the reaction L-seryl-tRNA(Sec) + selenophosphate + H(+) = L-selenocysteinyl-tRNA(Sec) + phosphate. Its pathway is aminoacyl-tRNA biosynthesis; selenocysteinyl-tRNA(Sec) biosynthesis; selenocysteinyl-tRNA(Sec) from L-seryl-tRNA(Sec) (bacterial route): step 1/1. In terms of biological role, converts seryl-tRNA(Sec) to selenocysteinyl-tRNA(Sec) required for selenoprotein biosynthesis. In Clostridium perfringens (strain ATCC 13124 / DSM 756 / JCM 1290 / NCIMB 6125 / NCTC 8237 / Type A), this protein is L-seryl-tRNA(Sec) selenium transferase.